Consider the following 559-residue polypeptide: Innexin-10 (559 aa).

The next 4 membrane-spanning stretches (helical) occupy residues 28–48, 102–122, 182–202, and 283–303; these read YFTC…QFGG, QWVP…SLLW, FLWL…YLCT, and IFIL…GSFF. Disordered regions lie at residues 488–514 and 527–559; these read EEKQ…YQNQ and YRTP…STFK. Residues 503 to 514 show a composition bias toward low complexity; the sequence is YTNQNPTPYQNQ. The segment covering 528-559 has biased composition (polar residues); the sequence is RTPSLSRGTDSRPVSTATDTDQTKKQSMSTFK.

Belongs to the pannexin family.

The protein localises to the cell membrane. The protein resides in the cell junction. It is found in the gap junction. Functionally, structural component of the gap junctions. The polypeptide is Innexin-10 (inx-10) (Caenorhabditis elegans).